We begin with the raw amino-acid sequence, 73 residues long: MSKDDLIQFTGTVIELAPNATFRVKLENGHVIIAHTAGRMRKNRIRILLGDKVTVEMTPYDLTKGRVILRHQS.

The region spanning 1-72 (MSKDDLIQFT…TKGRVILRHQ (72 aa)) is the S1-like domain.

This sequence belongs to the IF-1 family. Component of the 30S ribosomal translation pre-initiation complex which assembles on the 30S ribosome in the order IF-2 and IF-3, IF-1 and N-formylmethionyl-tRNA(fMet); mRNA recruitment can occur at any time during PIC assembly.

It localises to the cytoplasm. One of the essential components for the initiation of protein synthesis. Stabilizes the binding of IF-2 and IF-3 on the 30S subunit to which N-formylmethionyl-tRNA(fMet) subsequently binds. Helps modulate mRNA selection, yielding the 30S pre-initiation complex (PIC). Upon addition of the 50S ribosomal subunit IF-1, IF-2 and IF-3 are released leaving the mature 70S translation initiation complex. This Rickettsia bellii (strain OSU 85-389) protein is Translation initiation factor IF-1.